The sequence spans 937 residues: MTDSKYFTTNKKGEIFELKAELNNEKKEKRKEAVKKVIAAMTVGKDVSSLFPDVVNCMQTDNLELKKLVYLYLMNYAKSQPDMAIMAVNSFVKDCEDPNPLIRALAVRTMGCIRVDKITEYLCEPLRKCLKDEDPYVRKTAAVCVAKLHDINAQMVEDQGFLDSLRDLIADSNPMVVANAVAALSEISESHPNSNLLDLNPQNINKLLTALNECTEWGQIFILDCLSNYNPKDDREAQSICERVTPRLSHANSAVVLSAVKVLMKFLELLPKESDYYNMLLKKLAPPLVTLLSGEPEVQYVALRNINLIVQKRPEILKQEIKVFFVKYNDPIYVKLEKLDIMIRLASQANIAQVLAELKEYATEVDVDFVRKAVRAIGRCAIKVEQSAERCVSTLLDLIQTKVNYVVQEAIVVIRDIFRKYPNKYESIIATLCENLDSLDEPDARAAMIWIVGEYAERIDNADELLESFLEGFHDESTQVQLTLLTAIVKLFLKKPSETQELVQQVLSLATQDSDNPDLRDRGYIYWRLLSTDPVTAKEVVLSEKPLISEETDLIEPTLLDELICHIGSLASVYHKPPNAFVEGSHGIHRKHLPIHHGSTDAGDSPVGTTTATNLEQPQVIPSQGDLLGDLLNLDLGPPVNVPQVSSMQMGAVDLLGGGLDSLVGQSFIPSSVPATFAPSPTPAVVSSGLNDLFELSTGIGMAPGGYVAPKAVWLPAVKAKGLEISGTFTHRQGHIYMEMNFTNKALQHMTDFAIQFNKNSFGVIPSTPLAIHTPLMPNQSIDVSLPLNTLGPVMKMEPLNNLQVAVKNNIDVFYFSCLIPLNVLFVEDGKMERQVFLATWKDIPNENELQFQIKECHLNADTVSSKLQNNNVYTIAKRNVEGQDMLYQSLKLTNGIWILAELRIQPGNPNYTLSLKCRAPEVSQYIYQVYDSILKN.

Position 2 is an N-acetylthreonine (Thr-2). Phosphoserine is present on Ser-4. Residue Lys-265 is modified to N6-acetyllysine. 2 positions are modified to phosphotyrosine: Tyr-737 and Tyr-928.

This sequence belongs to the adaptor complexes large subunit family. Adapter protein complex 2 (AP-2) is a heterotetramer composed of two large adaptins (alpha-type subunit AP2A1 or AP2A2 and beta-type subunit AP2B1), a medium adaptin (mu-type subunit AP2M1) and a small adaptin (sigma-type subunit AP2S1). Interacts with EPN1. Interacts with EPS15; clathrin competes with EPS15. Interacts with SNAP91; clathrin competes with SNAP91. Interacts with CLTC; clathrin competes with EPS15, SNAP91 and PIP5K1C. Interacts with LDLRAP1. Interacts with AMPH and BIN1. Interacts with ARF6 (GDP-bound). Interacts (dephosphorylated at Tyr-737) with ARRB1; phosphorylation of AP2B1 at Tyr-737 disrupts the interaction. Interacts with SLC2A8. Interacts with SCYL1 and SCYL2. Interacts with TGFBR1 and TGFBR2. Interacts with PIP5K1C; clathrin competes with PIP5K1C. Interacts with DENND1B. Interacts with FCHO1. Interacts with RFTN1. Interacts with KIAA1107. Together with AP2A1 or AP2A2 and AP2M1, it interacts with ADAM10; this interaction facilitates ADAM10 endocytosis from the plasma membrane during long-term potentiation in hippocampal neurons. In terms of processing, the N-terminus is blocked. Post-translationally, phosphorylation at Tyr-737 by SRC occurs at the plasma membrane in clathrin-coated vesicles (CCVs).

It is found in the cell membrane. It localises to the membrane. Its subcellular location is the coated pit. Functionally, component of the adaptor protein complex 2 (AP-2). Adaptor protein complexes function in protein transport via transport vesicles in different membrane traffic pathways. Adaptor protein complexes are vesicle coat components and appear to be involved in cargo selection and vesicle formation. AP-2 is involved in clathrin-dependent endocytosis in which cargo proteins are incorporated into vesicles surrounded by clathrin (clathrin-coated vesicles, CCVs) which are destined for fusion with the early endosome. The clathrin lattice serves as a mechanical scaffold but is itself unable to bind directly to membrane components. Clathrin-associated adaptor protein (AP) complexes which can bind directly to both the clathrin lattice and to the lipid and protein components of membranes are considered to be the major clathrin adaptors contributing the CCV formation. AP-2 also serves as a cargo receptor to selectively sort the membrane proteins involved in receptor-mediated endocytosis. AP-2 seems to play a role in the recycling of synaptic vesicle membranes from the presynaptic surface. AP-2 recognizes Y-X-X-[FILMV] (Y-X-X-Phi) and [ED]-X-X-X-L-[LI] endocytosis signal motifs within the cytosolic tails of transmembrane cargo molecules. AP-2 may also play a role in maintaining normal post-endocytic trafficking through the ARF6-regulated, non-clathrin pathway. During long-term potentiation in hippocampal neurons, AP-2 is responsible for the endocytosis of ADAM10. The AP-2 beta subunit acts via its C-terminal appendage domain as a scaffolding platform for endocytic accessory proteins; at least some clathrin-associated sorting proteins (CLASPs) are recognized by their [DE]-X(1,2)-F-X-X-[FL]-X-X-X-R motif. The AP-2 beta subunit binds to clathrin heavy chain, promoting clathrin lattice assembly; clathrin displaces at least some CLASPs from AP2B1 which probably then can be positioned for further coat assembly. In Bos taurus (Bovine), this protein is AP-2 complex subunit beta (AP2B1).